A 127-amino-acid chain; its full sequence is Small ribosomal subunit protein uS13 (127 aa).

Residues 90–127 (RRHRQGLPVRGQRTRTNARTRRGRRLTVAGKKKTPAKK) form a disordered region. Basic residues predominate over residues 101-127 (QRTRTNARTRRGRRLTVAGKKKTPAKK).

The protein belongs to the universal ribosomal protein uS13 family. In terms of assembly, part of the 30S ribosomal subunit. Forms a loose heterodimer with protein S19. Forms two bridges to the 50S subunit in the 70S ribosome.

Functionally, located at the top of the head of the 30S subunit, it contacts several helices of the 16S rRNA. In the 70S ribosome it contacts the 23S rRNA (bridge B1a) and protein L5 of the 50S subunit (bridge B1b), connecting the 2 subunits; these bridges are implicated in subunit movement. Contacts the tRNAs in the A and P-sites. This chain is Small ribosomal subunit protein uS13, found in Synechocystis sp. (strain ATCC 27184 / PCC 6803 / Kazusa).